Here is a 448-residue protein sequence, read N- to C-terminus: MNAHEVNFDGLVGPTHNYGGLSYGNVASQSNSQALSNPKEAAKQGLAKMKALMELGFKQGVLAPQARPDTAALRSLGFSGSDEEVIRRAAKEAMPLLAACSSASSMWTANAATVSPSADTADGRVHFTAANLNCKFHRSIEHPTTSRVLAAMFNDERHFAHHAALPAVSQFGDEGAANHTRFCKDYGDAGVEFFVFGRSAFDSRFPAPQRYPARQTLEACQAVARLHGLSEAGVVYAQQNPAVIDQGVFHNDVISVGNGEVLFHHEDAFLDTEKVLAELHDKLGRRGGRFRAICVPREQVAVEDAVKSYLFNSQLLSKADGSMLLVVPEECRNNPRVWNYLERLTGDDGPIREVKVFDLKQSMQNGGGPACLRLRVALKEQELAAVNPGVIMTAGLYDTLVAWVDRHYRDRLGEADLADPQLLQECRTALDELTQILKLGSVYSFQLD.

Substrate is bound by residues 19 to 28 (GGLSYGNVAS), Asn110, and 137 to 138 (HR). Glu174 is an active-site residue. Substrate is bound at residue Arg214. Residue His250 is part of the active site. Substrate is bound by residues Asp252 and Asn365. Cys371 acts as the Nucleophile in catalysis.

This sequence belongs to the succinylarginine dihydrolase family. As to quaternary structure, homodimer.

The enzyme catalyses N(2)-succinyl-L-arginine + 2 H2O + 2 H(+) = N(2)-succinyl-L-ornithine + 2 NH4(+) + CO2. Its pathway is amino-acid degradation; L-arginine degradation via AST pathway; L-glutamate and succinate from L-arginine: step 2/5. Its function is as follows. Catalyzes the hydrolysis of N(2)-succinylarginine into N(2)-succinylornithine, ammonia and CO(2). This is N-succinylarginine dihydrolase from Pseudomonas paraeruginosa (strain DSM 24068 / PA7) (Pseudomonas aeruginosa (strain PA7)).